The following is a 277-amino-acid chain: Large ribosomal subunit protein uL2 (277 aa).

Disordered stretches follow at residues 35–57 and 222–277; these read RPLHSKGGRNVHGRITTRHQGGG and GVAM…NRRR. Composition is skewed to basic residues over residues 37 to 57 and 268 to 277; these read LHSKGGRNVHGRITTRHQGGG and VRRRKQNRRR.

Belongs to the universal ribosomal protein uL2 family. In terms of assembly, part of the 50S ribosomal subunit. Forms a bridge to the 30S subunit in the 70S ribosome.

In terms of biological role, one of the primary rRNA binding proteins. Required for association of the 30S and 50S subunits to form the 70S ribosome, for tRNA binding and peptide bond formation. It has been suggested to have peptidyltransferase activity; this is somewhat controversial. Makes several contacts with the 16S rRNA in the 70S ribosome. This Frankia casuarinae (strain DSM 45818 / CECT 9043 / HFP020203 / CcI3) protein is Large ribosomal subunit protein uL2.